Consider the following 75-residue polypeptide: Protein myomixer (75 aa).

At Met-1–Phe-5 the chain is on the cytoplasmic side. The helical transmembrane segment at Leu-6–Leu-28 threads the bilayer. Over Arg-29–Asn-75 the chain is Extracellular. The AxLyCxL signature appears at Ala-58 to Leu-67.

This sequence belongs to the MYMX family. Specifically expressed in the developing myotome.

The protein localises to the cell membrane. Its function is as follows. Myoblast-specific protein that mediates myoblast fusion, an essential step for the formation of multi-nucleated muscle fibers. Involved in membrane fusion downstream of the lipid mixing step mediated by mymk. Acts by generating membrane stresses via its extracellular C-terminus, leading to drive fusion pore formation. This Danio rerio (Zebrafish) protein is Protein myomixer.